The sequence spans 317 residues: Transaldolase (317 aa).

The Schiff-base intermediate with substrate role is filled by K126.

The protein belongs to the transaldolase family. Type 1 subfamily. As to quaternary structure, homodimer.

The protein resides in the cytoplasm. The enzyme catalyses D-sedoheptulose 7-phosphate + D-glyceraldehyde 3-phosphate = D-erythrose 4-phosphate + beta-D-fructose 6-phosphate. It participates in carbohydrate degradation; pentose phosphate pathway; D-glyceraldehyde 3-phosphate and beta-D-fructose 6-phosphate from D-ribose 5-phosphate and D-xylulose 5-phosphate (non-oxidative stage): step 2/3. Transaldolase is important for the balance of metabolites in the pentose-phosphate pathway. The sequence is that of Transaldolase from Burkholderia mallei (strain SAVP1).